The chain runs to 553 residues: Cytochrome P450 86A22 (553 aa).

Residues 8-24 (MIVAIVAAYLLWFKSIT) form a helical membrane-spanning segment. Residue cysteine 459 participates in heme binding.

Belongs to the cytochrome P450 family. Heme is required as a cofactor. Mostly expressed in the developing stigma of floral buds. Weakly detected in leaves, stems and flowers.

The protein resides in the membrane. The catalysed reaction is (9Z)-octadecenoyl-CoA + reduced [NADPH--hemoprotein reductase] + O2 = (9Z)-18-hydroxyoctadecenoyl-CoA + oxidized [NADPH--hemoprotein reductase] + H2O + H(+). It carries out the reaction (9Z,12Z)-octadecadienoyl-CoA + reduced [NADPH--hemoprotein reductase] + O2 = (9Z,12Z)-18-hydroxyoctadecadienoyl-CoA + oxidized [NADPH--hemoprotein reductase] + H2O + H(+). In terms of biological role, fatty acyl-CoA omega-hydroxylase essential for the production of omega-hydroxy fatty acids and the biosynthesis of triacylglycerol-/diacylglycerol-based estolide polyesters in the stigma. Substrate preference is 16:0-CoA &gt; 18:1-CoA &gt; 18:0-CoA. This Petunia hybrida (Petunia) protein is Cytochrome P450 86A22.